A 70-amino-acid chain; its full sequence is Bowman-Birk type proteinase inhibitor A-II (70 aa).

7 disulfides stabilise this stretch: cysteine 11–cysteine 68, cysteine 12–cysteine 29, cysteine 15–cysteine 63, cysteine 17–cysteine 27, cysteine 36–cysteine 43, cysteine 40–cysteine 55, and cysteine 45–cysteine 53.

It belongs to the Bowman-Birk serine protease inhibitor family.

Its function is as follows. These proteins inhibit trypsin and chymotrypsin, having 2 sites of interaction with trypsin. The site of interaction with chymotrypsin has not been determined but is not independent of the trypsin-reactive sites. This chain is Bowman-Birk type proteinase inhibitor A-II, found in Arachis hypogaea (Peanut).